The sequence spans 299 residues: Glycerol-3-phosphate dehydrogenase [NAD(P)+] (299 aa).

NADPH is bound by residues tryptophan 11, arginine 30, histidine 31, and lysine 79. 3 residues coordinate sn-glycerol 3-phosphate: lysine 79, glycine 107, and serine 109. Alanine 111 contributes to the NADPH binding site. Lysine 161, aspartate 214, serine 224, arginine 225, and asparagine 226 together coordinate sn-glycerol 3-phosphate. Lysine 161 serves as the catalytic Proton acceptor. Arginine 225 serves as a coordination point for NADPH. Residues valine 249 and glutamate 251 each contribute to the NADPH site.

The protein belongs to the NAD-dependent glycerol-3-phosphate dehydrogenase family.

It is found in the cytoplasm. It carries out the reaction sn-glycerol 3-phosphate + NAD(+) = dihydroxyacetone phosphate + NADH + H(+). The enzyme catalyses sn-glycerol 3-phosphate + NADP(+) = dihydroxyacetone phosphate + NADPH + H(+). It functions in the pathway membrane lipid metabolism; glycerophospholipid metabolism. Functionally, catalyzes the reduction of the glycolytic intermediate dihydroxyacetone phosphate (DHAP) to sn-glycerol 3-phosphate (G3P), the key precursor for phospholipid synthesis. The polypeptide is Glycerol-3-phosphate dehydrogenase [NAD(P)+] (Nitratiruptor sp. (strain SB155-2)).